A 202-amino-acid polypeptide reads, in one-letter code: Small ribosomal subunit protein uS4 (202 aa).

One can recognise an S4 RNA-binding domain in the interval 91–168 (SRLSSVLYNS…QKVPDYLEVD (78 aa)).

It belongs to the universal ribosomal protein uS4 family. In terms of assembly, part of the 30S ribosomal subunit. Contacts protein S5. The interaction surface between S4 and S5 is involved in control of translational fidelity.

In terms of biological role, one of the primary rRNA binding proteins, it binds directly to 16S rRNA where it nucleates assembly of the body of the 30S subunit. Functionally, with S5 and S12 plays an important role in translational accuracy. In Ehrlichia chaffeensis (strain ATCC CRL-10679 / Arkansas), this protein is Small ribosomal subunit protein uS4.